The primary structure comprises 247 residues: tRNA uridine(34) hydroxylase (247 aa).

Positions 124 to 218 constitute a Rhodanese domain; that stretch reads TKQNVIVIDT…YLEDTHNKNN (95 aa). Cysteine 178 (cysteine persulfide intermediate) is an active-site residue.

This sequence belongs to the TrhO family.

It carries out the reaction uridine(34) in tRNA + AH2 + O2 = 5-hydroxyuridine(34) in tRNA + A + H2O. Its function is as follows. Catalyzes oxygen-dependent 5-hydroxyuridine (ho5U) modification at position 34 in tRNAs. This chain is tRNA uridine(34) hydroxylase, found in Rickettsia typhi (strain ATCC VR-144 / Wilmington).